A 269-amino-acid chain; its full sequence is Undecaprenyl-diphosphatase (269 aa).

8 helical membrane passes run 1–21 (MDIMHAAVLGILQGLTEILPI), 40–59 (GLTFDVGLHVGTLIALCVYF), 87–107 (FFIIAGTVPAAIAGKTLEKPI), 117–137 (LIALLLIAFGLLLALADTTGP), 147–166 (LRGALLIGLAQCLALIPGVS), 188–208 (FSFLLSLPIVAGAGILKMGEL), 220–240 (PLLAGMATSAVSGYLGVALLL), and 248–268 (LYPFVWYRLLAGGAVLAYLFA).

It belongs to the UppP family.

It is found in the cell inner membrane. It carries out the reaction di-trans,octa-cis-undecaprenyl diphosphate + H2O = di-trans,octa-cis-undecaprenyl phosphate + phosphate + H(+). Functionally, catalyzes the dephosphorylation of undecaprenyl diphosphate (UPP). Confers resistance to bacitracin. This Geobacter sulfurreducens (strain ATCC 51573 / DSM 12127 / PCA) protein is Undecaprenyl-diphosphatase.